Reading from the N-terminus, the 505-residue chain is Trans-cinnamate 4-monooxygenase (505 aa).

The helical transmembrane segment at 3–23 (LLLLEKTLLGSFVAILVAILV) threads the bilayer. Residues 213–218 (RSRLAQ) and alanine 306 contribute to the (E)-cinnamate site. Cysteine 447 provides a ligand contact to heme.

This sequence belongs to the cytochrome P450 family. Heme serves as cofactor.

The protein resides in the membrane. The catalysed reaction is (E)-cinnamate + reduced [NADPH--hemoprotein reductase] + O2 = (E)-4-coumarate + oxidized [NADPH--hemoprotein reductase] + H2O + H(+). The protein operates within phenylpropanoid metabolism; trans-4-coumarate biosynthesis; trans-4-coumarate from trans-cinnamate: step 1/1. Its function is as follows. Catalyzes the first oxidative step of the phenylpropanoid pathway in higher plants by transforming trans-cinnamate into p-coumarate. The compounds formed by this pathway are essential components for lignification, pollination, and defense against ultraviolet light, predators and pathogens. In Populus tremuloides (Quaking aspen), this protein is Trans-cinnamate 4-monooxygenase (CYP73A13).